Consider the following 284-residue polypeptide: Nucleotide-binding protein Shewmr7_3352 (284 aa).

8–15 (GRSGSGKS) is an ATP binding site. 56–59 (DVRN) contacts GTP.

It belongs to the RapZ-like family.

Displays ATPase and GTPase activities. In Shewanella sp. (strain MR-7), this protein is Nucleotide-binding protein Shewmr7_3352.